The sequence spans 395 residues: Selection and upkeep of intraepithelial T-cells protein 7 (395 aa).

The first 25 residues, 1 to 25 (MMKPEFFCFSGFCVYFLFLQVVVSS), serve as a signal peptide directing secretion. The 116-residue stretch at 26-141 (EKLRVTTPTR…DAAIMNLNVT (116 aa)) folds into the Ig-like V-type domain. The Extracellular portion of the chain corresponds to 26 to 248 (EKLRVTTPTR…FNRDRIWMES (223 aa)). A disulfide bridge links C49 with C123. Residues N92 and N139 are each glycosylated (N-linked (GlcNAc...) asparagine). In terms of domain architecture, Ig-like C1-type spans 142–233 (AVGLETEIHV…TGEEKQTSII (92 aa)). A disulfide bridge connects residues C163 and C217. A helical membrane pass occupies residues 249 to 269 (LASIVWIMLSVYILYIICFYW). At 270-287 (RTGCASGCLSKCFCVVTS) the chain is on the cytoplasmic side. The chain crosses the membrane as a helical span at residues 288-308 (WPVQIVHLLFCTGTFFAIYLP). At 309 to 329 (HRSRVSLSDPQFPLYNNWITE) the chain is on the extracellular side. The helical transmembrane segment at 330–350 (LLFVILFLTICFALPIILLFI) threads the bilayer. Residues 351–395 (QFQFTSLTKWEKNKDGIMDQPRLGKAHETSSLYRKKTGKSWEQEK) are Cytoplasmic-facing. Residues 371–395 (PRLGKAHETSSLYRKKTGKSWEQEK) are disordered.

The protein belongs to the SKINT family. Expressed in skin, thymus, testis and, to a lower extent, bladder.

The protein localises to the membrane. May act by engaging a cell surface molecule on immature T-cells in the embryonic thymus. The chain is Selection and upkeep of intraepithelial T-cells protein 7 (Skint7) from Mus musculus (Mouse).